A 181-amino-acid chain; its full sequence is Lysozyme B (181 aa).

The signal sequence occupies residues 1 to 19; the sequence is MRISFFLLILAVIIGYAYG. A propeptide spanning residues 139–181 is cleaved from the precursor; the sequence is LTDSRPLGPFNVTEEEKAQLFIDHEIAMAQCEAEKTCNGFDLE.

The protein belongs to the dictyostelium lysozyme family. Post-translationally, contains six disulfide bonds.

It localises to the cytoplasmic vesicle lumen. The catalysed reaction is Hydrolysis of (1-&gt;4)-beta-linkages between N-acetylmuramic acid and N-acetyl-D-glucosamine residues in a peptidoglycan and between N-acetyl-D-glucosamine residues in chitodextrins.. Its function is as follows. Has antibacterial activity. This Dictyostelium discoideum (Social amoeba) protein is Lysozyme B (alyB).